The primary structure comprises 215 residues: Pyridoxine/pyridoxamine 5'-phosphate oxidase (215 aa).

Substrate-binding positions include arginine 9 to tyrosine 12 and lysine 69. FMN contacts are provided by residues arginine 64 to lysine 69, phenylalanine 79 to threonine 80, lysine 86, and glutamine 108. Substrate contacts are provided by tyrosine 126, arginine 130, and serine 134. FMN-binding positions include glutamine 143–serine 144 and tryptophan 188. Substrate is bound at residue arginine 194 to histidine 196. Arginine 198 is a binding site for FMN.

The protein belongs to the pyridoxamine 5'-phosphate oxidase family. As to quaternary structure, homodimer. The cofactor is FMN.

It catalyses the reaction pyridoxamine 5'-phosphate + O2 + H2O = pyridoxal 5'-phosphate + H2O2 + NH4(+). The catalysed reaction is pyridoxine 5'-phosphate + O2 = pyridoxal 5'-phosphate + H2O2. Its pathway is cofactor metabolism; pyridoxal 5'-phosphate salvage; pyridoxal 5'-phosphate from pyridoxamine 5'-phosphate: step 1/1. The protein operates within cofactor metabolism; pyridoxal 5'-phosphate salvage; pyridoxal 5'-phosphate from pyridoxine 5'-phosphate: step 1/1. In terms of biological role, catalyzes the oxidation of either pyridoxine 5'-phosphate (PNP) or pyridoxamine 5'-phosphate (PMP) into pyridoxal 5'-phosphate (PLP). In Pseudomonas syringae pv. tomato (strain ATCC BAA-871 / DC3000), this protein is Pyridoxine/pyridoxamine 5'-phosphate oxidase.